A 213-amino-acid polypeptide reads, in one-letter code: Uridine kinase (213 aa).

15-22 contributes to the ATP binding site; sequence GASASGKS.

Belongs to the uridine kinase family.

The protein resides in the cytoplasm. It carries out the reaction uridine + ATP = UMP + ADP + H(+). It catalyses the reaction cytidine + ATP = CMP + ADP + H(+). Its pathway is pyrimidine metabolism; CTP biosynthesis via salvage pathway; CTP from cytidine: step 1/3. The protein operates within pyrimidine metabolism; UMP biosynthesis via salvage pathway; UMP from uridine: step 1/1. This chain is Uridine kinase, found in Escherichia coli O157:H7.